The primary structure comprises 77 residues: MLRINVCFDASKKVPAKIQQALRAEIEKEILSNYERGVVSVGKGSSAEVSISGVDDDEKKVIMQKLEDIWQSDSWLP.

It belongs to the DinI family.

The sequence is that of Protein ImpC (impC) from Salmonella typhimurium.